Reading from the N-terminus, the 304-residue chain is Protoheme IX farnesyltransferase (304 aa).

Helical transmembrane passes span 32–52, 54–74, 104–124, 126–146, 154–174, 180–200, 226–246, 247–267, and 284–304; these read VVALMLLTVLVGMCLAVPGSV, LQPLVIGMIGIGMMAGAAAAF, ALTFAISLAALGFVLLYTLVN, LTAWLTFASLIGYALVYTAYL, IVVGGLAGAMPPLLGWTSVTG, ALLLVIIIFAWTPPHFWALAI, CILLYTVLLAIACLLPVLVGM, CGPVYLVGSTLLSCGFIYKAW, and FSIYHLMLLFLVLLVDHYLWV.

The protein belongs to the UbiA prenyltransferase family. Protoheme IX farnesyltransferase subfamily.

The protein resides in the cell inner membrane. The enzyme catalyses heme b + (2E,6E)-farnesyl diphosphate + H2O = Fe(II)-heme o + diphosphate. It functions in the pathway porphyrin-containing compound metabolism; heme O biosynthesis; heme O from protoheme: step 1/1. Functionally, converts heme B (protoheme IX) to heme O by substitution of the vinyl group on carbon 2 of heme B porphyrin ring with a hydroxyethyl farnesyl side group. This Shewanella sediminis (strain HAW-EB3) protein is Protoheme IX farnesyltransferase.